The following is a 178-amino-acid chain: Large ribosomal subunit protein uL6 (178 aa).

Belongs to the universal ribosomal protein uL6 family. As to quaternary structure, part of the 50S ribosomal subunit.

Functionally, this protein binds to the 23S rRNA, and is important in its secondary structure. It is located near the subunit interface in the base of the L7/L12 stalk, and near the tRNA binding site of the peptidyltransferase center. The chain is Large ribosomal subunit protein uL6 from Shouchella clausii (strain KSM-K16) (Alkalihalobacillus clausii).